Here is a 284-residue protein sequence, read N- to C-terminus: 2,3,4,5-tetrahydropyridine-2,6-dicarboxylate N-succinyltransferase (284 aa).

It belongs to the transferase hexapeptide repeat family.

It localises to the cytoplasm. It carries out the reaction (S)-2,3,4,5-tetrahydrodipicolinate + succinyl-CoA + H2O = (S)-2-succinylamino-6-oxoheptanedioate + CoA. It participates in amino-acid biosynthesis; L-lysine biosynthesis via DAP pathway; LL-2,6-diaminopimelate from (S)-tetrahydrodipicolinate (succinylase route): step 1/3. This chain is 2,3,4,5-tetrahydropyridine-2,6-dicarboxylate N-succinyltransferase, found in Brucella abortus (strain S19).